A 345-amino-acid polypeptide reads, in one-letter code: Serine proteinase inhibitor 2 (345 aa).

The protein belongs to the serpin family. Poxviruses subfamily.

It localises to the host cytoplasm. In terms of biological role, viral serpin that inhibits both cysteine and serine proteinases involved in the regulation of host inflammatory and apoptosis processes. Major anti-apoptotic protein which inhibits both intrinsic and extrinsic pathways and strongly cleaves host CASP1 and CASP8 but is a rather poor inhibitor of host CASP3. Prevents the proteolytic activity of host interleukin-1-beta converting enzyme (ICE) and ICE-like enzymes. Can also block apoptosis through host tumor necrosis factor (TNF) receptor. The inhibition of host ICE is an example of a 'cross-class' interaction, in which a serpin inhibits a non-serine proteinase. Also inhibits granzyme B. This chain is Serine proteinase inhibitor 2 (OPG199), found in Vaccinia virus (strain Western Reserve) (VACV).